The following is a 366-amino-acid chain: 3-dehydroquinate synthase (366 aa).

NAD(+)-binding positions include glycine 107–aspartate 111, threonine 131–threonine 132, lysine 144, and lysine 153. Glutamate 186, histidine 251, and histidine 268 together coordinate Zn(2+).

The protein belongs to the sugar phosphate cyclases superfamily. Dehydroquinate synthase family. It depends on Co(2+) as a cofactor. The cofactor is Zn(2+). NAD(+) serves as cofactor.

It localises to the cytoplasm. The catalysed reaction is 7-phospho-2-dehydro-3-deoxy-D-arabino-heptonate = 3-dehydroquinate + phosphate. Its pathway is metabolic intermediate biosynthesis; chorismate biosynthesis; chorismate from D-erythrose 4-phosphate and phosphoenolpyruvate: step 2/7. Functionally, catalyzes the conversion of 3-deoxy-D-arabino-heptulosonate 7-phosphate (DAHP) to dehydroquinate (DHQ). This is 3-dehydroquinate synthase from Microcystis aeruginosa (strain NIES-843 / IAM M-2473).